The chain runs to 350 residues: Putative deoxyribonuclease-2 (350 aa).

This sequence belongs to the DNase II family.

In Burkholderia thailandensis (strain ATCC 700388 / DSM 13276 / CCUG 48851 / CIP 106301 / E264), this protein is Putative deoxyribonuclease-2.